The following is a 671-amino-acid chain: Spartin (671 aa).

Met1 bears the N-acetylmethionine mark. Residues 16-94 (IKEAYEKAFM…LQNVRTRLEI (79 aa)) enclose the MIT domain. The tract at residues 110–175 (VPKLYPEFPP…CPAEAPPAYS (66 aa)) is disordered. Basic and acidic residues predominate over residues 118–128 (PPKDACKKSPE). Ser126 is modified (phosphoserine). Positions 143-158 (GSASAACAGPSGAPSA) are enriched in low complexity. Positions 159 to 174 (LPVPSPSCPAEAPPAY) are enriched in pro residues. The tract at residues 190 to 385 (DSGEFSSVGE…SIDQGSKDAR (196 aa)) is ubiquitin-binding region (UBR) domain. Positions 193–200 (EFSSVGED) match the LC3-interacting region (LIR); mediates interaction with MAP1LC3A AND MAP1LC3C motif. The tract at residues 346–421 (FQIPGRSSHP…SSEEKSKELP (76 aa)) is disordered. Lys360 participates in a covalent cross-link: Glycyl lysine isopeptide (Lys-Gly) (interchain with G-Cter in ubiquitin). The span at 369–379 (QSSSSGSSIDQ) shows a compositional bias: low complexity. Basic residues predominate over residues 384–393 (ARHKGKRGKK). The Senescence domain occupies 431–615 (ILSGASWVSW…YNIDNIGIKA (185 aa)). The interval 435–507 (ASWVSWGLVK…LVDGVCTVAN (73 aa)) is required for localization to lipid droplets. Phosphoserine is present on Ser474. Residues 635-671 (VERPQRESQGGATSTEGRRDIGKQVEEEKPGAGKKDK) form a disordered region. Residues 650 to 671 (EGRRDIGKQVEEEKPGAGKKDK) are compositionally biased toward basic and acidic residues.

Interacts with ITCH and WWP1. Interacts (via MIT domain) with IST1; leading to the recruitment of SPART to midbodies. Interacts with MAP1LC3A and MAP1LC3C. Ubiquitinated; ubiquitination does not require ITCH and WWP1. As to expression, brain (at protein level).

The protein resides in the cytoplasm. It is found in the midbody. Its subcellular location is the lipid droplet. In terms of biological role, lipophagy receptor that plays an important role in lipid droplet (LD) turnover in motor neurons. Localizes to LDs and interacts with components of the autophagy machinery, such as MAP1LC3A/C proteins to deliver LDs to autophagosomes for degradation via lipophagy. Lipid transfer protein required for lipid droplet degradation, including by lipophagy. Can bind and transfer all lipid species found in lipid droplets, from phospholipids to triglycerides and sterol esters but the direction of lipid transfer by spartin and its cargos are unknown. May be implicated in endosomal trafficking, or microtubule dynamics, or both. Participates in cytokinesis. The polypeptide is Spartin (Mus musculus (Mouse)).